The sequence spans 405 residues: uncharacterized protein (405 aa).

12 helical membrane-spanning segments follow: residues 3-23 (IIAKIPAWMLLCLFILSPTTE), 42-62 (GITQTTSTLYFLGFALGILTL), 73-93 (PIALLGLFIYVISSIISIFAV), 95-115 (IEMLMIARFVQAFGVSVGSVI), 135-155 (SLSPWLLFIPSLGSSIGGYII), 162-182 (YVFVFFSLTGTILLALYYKVL), 209-229 (ILWLYAFIIGAFNGIYYGFFI), 248-268 (KLAFLLSFAAIFGGFLGGYLI), 280-300 (GLGFIFSLCGCILFAVNAFIL), 309-329 (LAIAMIFVPMMIHMVGHNLLI), 346-366 (TAGSIFGAIYYVVIAAVTYLV), and 377-397 (FALLCFVLSISSAISFYCIWV).

Belongs to the major facilitator superfamily. Bcr/CmlA family.

The protein resides in the cell inner membrane. This is an uncharacterized protein from Rickettsia felis (strain ATCC VR-1525 / URRWXCal2) (Rickettsia azadi).